The following is a 1346-amino-acid chain: DNA-directed RNA polymerase subunit beta (1346 aa).

This sequence belongs to the RNA polymerase beta chain family. In terms of assembly, the RNAP catalytic core consists of 2 alpha, 1 beta, 1 beta' and 1 omega subunit. When a sigma factor is associated with the core the holoenzyme is formed, which can initiate transcription.

It catalyses the reaction RNA(n) + a ribonucleoside 5'-triphosphate = RNA(n+1) + diphosphate. Functionally, DNA-dependent RNA polymerase catalyzes the transcription of DNA into RNA using the four ribonucleoside triphosphates as substrates. The chain is DNA-directed RNA polymerase subunit beta from Psychromonas ingrahamii (strain DSM 17664 / CCUG 51855 / 37).